The sequence spans 594 residues: AT-rich interactive domain-containing protein 5A (594 aa).

Residues 1-56 (MAAPVKGNRKQSTEGDALDPPASPKPAGKQNGIQNPISLEDSPEAGGEREEEQERE) form a disordered region. An interaction with SOX9 region spans residues 1-300 (MAAPVKGNRK…AVHLPESPQS (300 aa)). Ser-23 is modified (phosphoserine). Residues 55 to 147 (REEEQAFLVS…LVLPYVRHLK (93 aa)) enclose the ARID domain. Residues Lys-85 and Lys-94 each participate in a glycyl lysine isopeptide (Lys-Gly) (interchain with G-Cter in ubiquitin) cross-link. The disordered stretch occupies residues 146–223 (LKGEDDKPLP…NSTEQQGLAS (78 aa)). Positions 165–189 (MAKENRGDDGATERPKKAKEERRMD) are enriched in basic and acidic residues. Phosphoserine is present on residues Ser-256 and Ser-289. Disordered regions lie at residues 281–331 (RHGA…EAQA) and 426–454 (AESP…GAAH). Residues 297 to 306 (SPQSPKGLTE) are compositionally biased toward polar residues. A phosphoserine mark is found at Ser-438 and Ser-463.

In terms of assembly, interacts with SOX9. Interacts with ESR1. Interacts with RORC. Phosphorylated by MAPK14 on serine residues involving a TLR4 signaling pathway upon lipopolysaccharide (LPS) stimulation leading to its ubiquitination and proteasomal degradation. Post-translationally, ubiquitinated leading to proteasomal degradation; involving WWP1 linked to MAPK14-mediated phosphorylation upon LPS stimulation.

Its subcellular location is the nucleus. DNA-binding protein that may regulate transcription and act as a repressor by binding to AT-rich stretches in the promoter region of target genes. May positively regulate chondrocyte-specific transcription such as of COL2A1 in collaboration with SOX9 and positively regulate histone H3 acetylation at chondrocyte-specific genes. May stimulate early-stage chondrocyte differentiation and inhibit later stage differention. Can repress ESR1-mediated transcriptional activation; proposed to act as corepressor for selective nuclear hormone receptors. As an RNA-binding protein, involved in the regulation of inflammatory response by stabilizing selective inflammation-related mRNAs, such as STAT3 and TBX21. Also stabilizes IL6 mRNA. Binds to stem loop structures located in the 3'UTRs of IL6, STAT3 and TBX21 mRNAs; at least for STAT3 prevents binding of ZC3H12A to the mRNA stem loop structure thus inhibiting its degradation activity. Contributes to elevated IL6 levels possibly implicated in autoimmunity processes. IL6-dependent stabilization of STAT3 mRNA may promote differentiation of naive CD4+ T-cells into T-helper Th17 cells. In CD4+ T-cells may also inhibit RORC-induced Th17 cell differentiation independently of IL6 signaling. Stabilization of TBX21 mRNA contributes to elevated interferon-gamma secretion in Th1 cells possibly implicated in the establishment of septic shock. Stabilizes TNFRSF4/OX40 mRNA by binding to the conserved stem loop structure in its 3'UTR; thereby competing with the mRNA-destabilizing functions of RC3H1 and endoribonuclease ZC3H12A. The polypeptide is AT-rich interactive domain-containing protein 5A (ARID5A) (Homo sapiens (Human)).